The primary structure comprises 401 residues: 1-deoxy-D-xylulose 5-phosphate reductoisomerase (401 aa).

Residues Thr-10, Gly-11, Ser-12, Ile-13, Gly-36, Arg-37, Asn-38, and Asn-124 each coordinate NADPH. Lys-125 contributes to the 1-deoxy-D-xylulose 5-phosphate binding site. Glu-126 is an NADPH binding site. Asp-150 contacts Mn(2+). Positions 151, 152, 176, and 199 each coordinate 1-deoxy-D-xylulose 5-phosphate. Glu-152 provides a ligand contact to Mn(2+). Gly-205 is an NADPH binding site. Positions 212, 217, 218, and 221 each coordinate 1-deoxy-D-xylulose 5-phosphate. Position 221 (Glu-221) interacts with Mn(2+).

This sequence belongs to the DXR family. It depends on Mg(2+) as a cofactor. Mn(2+) serves as cofactor.

It catalyses the reaction 2-C-methyl-D-erythritol 4-phosphate + NADP(+) = 1-deoxy-D-xylulose 5-phosphate + NADPH + H(+). The protein operates within isoprenoid biosynthesis; isopentenyl diphosphate biosynthesis via DXP pathway; isopentenyl diphosphate from 1-deoxy-D-xylulose 5-phosphate: step 1/6. In terms of biological role, catalyzes the NADPH-dependent rearrangement and reduction of 1-deoxy-D-xylulose-5-phosphate (DXP) to 2-C-methyl-D-erythritol 4-phosphate (MEP). The protein is 1-deoxy-D-xylulose 5-phosphate reductoisomerase of Acaryochloris marina (strain MBIC 11017).